The sequence spans 528 residues: ADP,ATP carrier protein 1 (528 aa).

Helical transmembrane passes span Leu24 to Leu44, Ile63 to Ala83, Ala93 to Ile113, Ala124 to Leu144, Phe149 to Trp169, Phe184 to Ile204, Trp220 to Ala240, Tyr284 to Val304, Phe327 to Ile347, Ala356 to Phe376, Thr381 to Ile401, and Ile463 to Thr483.

This sequence belongs to the ADP/ATP translocase tlc family.

It localises to the cell membrane. This chain is ADP,ATP carrier protein 1 (tlcA), found in Chlamydia trachomatis serovar D (strain ATCC VR-885 / DSM 19411 / UW-3/Cx).